Consider the following 430-residue polypeptide: Tyrosine--tRNA ligase (430 aa).

Tyr32 contacts L-tyrosine. The short motif at 37–46 is the 'HIGH' region element; the sequence is PTADSLHIGH. Residues Tyr172 and Gln176 each coordinate L-tyrosine. The 'KMSKS' region motif lies at 232-236; sequence KFGKT. Lys235 provides a ligand contact to ATP. The S4 RNA-binding domain occupies 362 to 430; it reads ISLVDLLADA…KKSYYLIIVE (69 aa).

This sequence belongs to the class-I aminoacyl-tRNA synthetase family. TyrS type 1 subfamily. As to quaternary structure, homodimer.

It localises to the cytoplasm. The enzyme catalyses tRNA(Tyr) + L-tyrosine + ATP = L-tyrosyl-tRNA(Tyr) + AMP + diphosphate + H(+). Functionally, catalyzes the attachment of tyrosine to tRNA(Tyr) in a two-step reaction: tyrosine is first activated by ATP to form Tyr-AMP and then transferred to the acceptor end of tRNA(Tyr). This chain is Tyrosine--tRNA ligase, found in Porphyromonas gingivalis (strain ATCC 33277 / DSM 20709 / CIP 103683 / JCM 12257 / NCTC 11834 / 2561).